The chain runs to 250 residues: 2,3-bisphosphoglycerate-dependent phosphoglycerate mutase (250 aa).

Residues Arg-10–Asn-17, Thr-23–Gly-24, Arg-62, Glu-89–Tyr-92, Lys-100, Arg-116–Arg-117, and Gly-185–Asn-186 each bind substrate. Residue His-11 is the Tele-phosphohistidine intermediate of the active site. The active-site Proton donor/acceptor is the Glu-89.

The protein belongs to the phosphoglycerate mutase family. BPG-dependent PGAM subfamily. As to quaternary structure, homodimer.

It catalyses the reaction (2R)-2-phosphoglycerate = (2R)-3-phosphoglycerate. The protein operates within carbohydrate degradation; glycolysis; pyruvate from D-glyceraldehyde 3-phosphate: step 3/5. Functionally, catalyzes the interconversion of 2-phosphoglycerate and 3-phosphoglycerate. This Serratia proteamaculans (strain 568) protein is 2,3-bisphosphoglycerate-dependent phosphoglycerate mutase.